We begin with the raw amino-acid sequence, 306 residues long: tRNA dimethylallyltransferase (306 aa).

An ATP-binding site is contributed by 12 to 19; the sequence is GPTGTKKS.

The protein belongs to the IPP transferase family. Monomer. The cofactor is Mg(2+).

It carries out the reaction adenosine(37) in tRNA + dimethylallyl diphosphate = N(6)-dimethylallyladenosine(37) in tRNA + diphosphate. In terms of biological role, catalyzes the transfer of a dimethylallyl group onto the adenine at position 37 in tRNAs that read codons beginning with uridine, leading to the formation of N6-(dimethylallyl)adenosine (i(6)A). The protein is tRNA dimethylallyltransferase of Mycoplasmoides gallisepticum (strain R(low / passage 15 / clone 2)) (Mycoplasma gallisepticum).